The primary structure comprises 215 residues: Adenylate kinase (215 aa).

Residue 10-15 participates in ATP binding; it reads GAGKGT. Positions 30 to 59 are NMP; sequence STGDMLRAAVKAGTELGLKAKSVMDAGGLV. Residues Thr-31, Arg-36, 57 to 59, 85 to 88, and Gln-92 each bind AMP; these read GLV and GFPR. The interval 122–159 is LID; the sequence is GRRVHPASGRVYHTEYNPPKVAGKDDVSGEELVQREDD. ATP-binding positions include Arg-123 and 132–133; that span reads VY. AMP is bound by residues Arg-156 and Arg-167. Gly-201 lines the ATP pocket.

Belongs to the adenylate kinase family. As to quaternary structure, monomer.

It localises to the cytoplasm. The catalysed reaction is AMP + ATP = 2 ADP. It functions in the pathway purine metabolism; AMP biosynthesis via salvage pathway; AMP from ADP: step 1/1. In terms of biological role, catalyzes the reversible transfer of the terminal phosphate group between ATP and AMP. Plays an important role in cellular energy homeostasis and in adenine nucleotide metabolism. The polypeptide is Adenylate kinase (Ectopseudomonas mendocina (strain ymp) (Pseudomonas mendocina)).